Here is a 412-residue protein sequence, read N- to C-terminus: MLGSTGSIGTQTLEIAKECPEQFKVVALTAGRNLDLLIKQIQEHQPEVVALARKDILPELQERLNSLTGKERPNALPHLVAGNDGLNIAASWHSADLVVTGIVGCAGLLPTLAAIKAGKDIALANKETLIAAGPVVIPELKRSGSRLLPADSEHSAIFQCLQGTPWPENARLSTGIPTPGLRNIQLTASGGAFRDWATEDLKHASIKDATSHPNWSMGKKITVDSATLMNKGLEVIEAHYLFGLDYDHIEIVIHPQSIIHSMIELNDSSVLAQMGWPDMKLPILYAMSWPNRINTSWRRLNLSEIGKLTFHEPDTSKYPCMELAYAAGKAAGTMPAVLNAANEEAVALFLEEKIHFLNIPKVIEAACENHKKDLKFDPQLQDVIEVDYWARREVRSQVQKDSNQITMATYKK.

NADPH-binding residues include Thr-5, Gly-6, Ser-7, Ile-8, Gly-31, Arg-32, Asn-33, and Asn-125. Lys-126 contacts 1-deoxy-D-xylulose 5-phosphate. Glu-127 is an NADPH binding site. Asp-151 provides a ligand contact to Mn(2+). The 1-deoxy-D-xylulose 5-phosphate site is built by Ser-152, Glu-153, Ser-189, and His-212. Glu-153 provides a ligand contact to Mn(2+). Residue Gly-218 coordinates NADPH. 1-deoxy-D-xylulose 5-phosphate is bound by residues Ser-225, Asn-230, Lys-231, and Glu-234. Position 234 (Glu-234) interacts with Mn(2+).

This sequence belongs to the DXR family. Mg(2+) is required as a cofactor. The cofactor is Mn(2+).

It catalyses the reaction 2-C-methyl-D-erythritol 4-phosphate + NADP(+) = 1-deoxy-D-xylulose 5-phosphate + NADPH + H(+). The protein operates within isoprenoid biosynthesis; isopentenyl diphosphate biosynthesis via DXP pathway; isopentenyl diphosphate from 1-deoxy-D-xylulose 5-phosphate: step 1/6. Its function is as follows. Catalyzes the NADPH-dependent rearrangement and reduction of 1-deoxy-D-xylulose-5-phosphate (DXP) to 2-C-methyl-D-erythritol 4-phosphate (MEP). The protein is 1-deoxy-D-xylulose 5-phosphate reductoisomerase of Prochlorococcus marinus (strain SARG / CCMP1375 / SS120).